The following is a 264-amino-acid chain: Apolipoprotein A-I (264 aa).

A signal peptide spans 1–18 (MKAVVLAVALVFLTGSQA). 2 consecutive repeat copies span residues 67–88 (LNLL…ERLG) and 89–110 (PLTR…QEMN). Residues 67-264 (LNLLENWDTL…DKARETLTAQ (198 aa)) form a 10 X approximate tandem repeats region. Met-109 bears the Methionine sulfoxide mark. The stretch at 111–121 (KDLEEVKQNVQ) is one 3; half-length repeat. A run of 3 repeats spans residues 122–143 (PYLD…QRVA), 144–165 (PLGA…GKLS), and 166–187 (PVAE…TQLA). Residues 188–207 (PHSDKLRESLAQRLAELKSN) form a 7; truncated repeat. The stretch at 208–229 (PTLNEYHTRAKTHLNTFGEKAR) is repeat 8. One copy of the 9; half-length repeat lies at 230–240 (PALEDLRHTLI). Repeat unit 10 spans residues 241 to 264 (PILDTLKTKVKSVIDKARETLTAQ).

The protein belongs to the apolipoprotein A1/A4/E family. Homodimer. Interacts with APOA1BP and CLU. Component of a sperm activating protein complex (SPAP), consisting of APOA1, an immunoglobulin heavy chain, an immunoglobulin light chain and albumin. Interacts with NDRG1. Interacts with SCGB3A2. Interacts with NAXE and YJEFN3. In terms of processing, glycosylated. Palmitoylated. Post-translationally, phosphorylation sites are present in the extracellular medium.

It localises to the secreted. Participates in the reverse transport of cholesterol from tissues to the liver for excretion by promoting cholesterol efflux from tissues and by acting as a cofactor for the lecithin cholesterol acyltransferase (LCAT). As part of the SPAP complex, activates spermatozoa motility. This Mus pahari (Gairdner's shrew-mouse) protein is Apolipoprotein A-I (Apoa1).